Reading from the N-terminus, the 1520-residue chain is MKNVEFSLERGQRLKMPARKLREIVSPNQGNKLAVVEDELPRVPPALAANKRLAVETRTSSNGTLCGSLDLTSARLYHQPLLESPPASKKSDFSKDAVVRQLPLNKTEENNAPKANDIFISQYTMGQKDALRTVLKQKAQSMPVFKAVKVHLFEDTSTEKNTVAQETETPPNRIDSATTVAAATAAAIATAAPLIKVQSDLEAKVNCVGELLTKLQETDKQLQRVTEHQASVQSKQEKVHCHDHDKQMNAFMEQHIRHLEKLQQQQIDIQTHFIDAALKASSLQLGMSTSRAVGKYSGKLGSPSVGSSVFSHNTFVSKRVPLSEDTDFDGQKSPLETPAPRRFAPVPVSRDGKITKRESPTEEKENMEMNSPKGNVRLLEQVLNSNECLTRKTESSDITSLTQPKMGWNLEKRDSTETLHSQIFPSSEERGTAQVPVPKYNDVVHDLGQKKQASDMLQIKQSPVTLRLSDHPHNPALLQTTNTRSVLKDAAKILRGVQNNKKVLEENLEAIVRAKDGAAMYSFINALATNREMSEKIRIRKQVDEWIKIISAEIQDELMRKDYEQKRFDPKNQRNKKALTMSRDIKANNQEKTVNRSVIPRSHYQKQTQEQFTSPPVRNLPASGPQKERSGLLKSATTLQDEDYMLQIYGKPVYQGHRSTLKKGPYLRFSSPSPKAKPQRPRVIELVKGTKVKSAKTQTDFHAASRMKMDSKIQHPITALPHADQQYMVSPSREMPTVSGTLEGHLIPMAILLGQTQSNSDSMPPAGVTVNKPRPVTVTTSIPPASRKGNAGVKKPNVAIVEMKSEKKDPPQLSVQILPSVDIDSVSYSSTDGASSPPSPKEASLPPLHTWIQTPDFMKVDEEEVPLPGTNFDEVIDVIQEEEKRDEIPECSAPMLEFNRSVKVVPTKYNGPSFPPVVSAYHPTTDILDKVIERKETLENSLIQWVEQEIMSRIISGLFPLQQQARLDASVSVSEASEPSASDIVAGTSSGALQRMVDARVPVNSDMVSHFVNEALTETIAVMLADREAERQRAAATSVPGDLSGTETNLLARVCAPVATPQPTPPCSPSPVREHVRVKTPDSSPCESDPDAASSIKEIRVEKGSDMPAVMLVSTPTRTPVATPPPAAALTPTLSETSIDKLKLSSPELPKPWDSGDLPLDEENPNSLQELPHPRAVVMSVANEEPESVDFSAQPAPPEPAPSAPLPEGTKAPSLQRVPSSGSSTLENTLSTVTETETLDRHISEGEILFSCGQNLATKRPGDLFLMNINDSLSSTLQDALEMEDDPPSEGQVIRRPHKKRHEDAIVALLTKQQRELLVSQQEEDLDNSVGELSEGQRLVLKAAEDISAGPSGQMLPPTSPAEPSYQHADPRLVLQQSDMASGNICEDLCASHGPMSLRELELQPDSNLILPITHTTTAVSDGNLPEAAEDFSQYQQKQDSDIKQVEHKPIQRHLTSVRNKPDSTLSQHQGGPADLLLIAHVSPARMSVTLPSANLEDCSQSLSTSSMHGGTESSGTDTF.

Residues 322-370 are disordered; sequence LSEDTDFDGQKSPLETPAPRRFAPVPVSRDGKITKRESPTEEKENMEMN. The span at 350-367 shows a compositional bias: basic and acidic residues; it reads RDGKITKRESPTEEKENM. The residue at position 426 (serine 426) is a Phosphoserine. The interval 485 to 572 is required for centrosomal localization; that stretch reads SVLKDAAKIL…YEQKRFDPKN (88 aa). The stretch at 487–519 forms a coiled coil; that stretch reads LKDAAKILRGVQNNKKVLEENLEAIVRAKDGAA. Disordered stretches follow at residues 568–632, 759–793, 826–848, 1060–1093, 1145–1170, 1184–1230, and 1500–1520; these read FDPK…RSGL, NSDSMPPAGVTVNKPRPVTVTTSIPPASRKGNAGV, VSYSSTDGASSPPSPKEASLPPL, TPQPTPPCSPSPVREHVRVKTPDSSPCESDPDAA, SSPELPKPWDSGDLPLDEENPNSLQE, EEPE…ENTL, and SQSLSTSSMHGGTESSGTDTF. Polar residues-rich tracts occupy residues 587–596 and 605–616; these read ANNQEKTVNR and QKQTQEQFTSPP. Residues 826 to 836 are compositionally biased toward polar residues; that stretch reads VSYSSTDGASS. A phosphothreonine mark is found at threonine 1060 and threonine 1064. Residues 1060-1069 show a composition bias toward pro residues; that stretch reads TPQPTPPCSP. The residue at position 1068 (serine 1068) is a Phosphoserine. Threonine 1080 carries the post-translational modification Phosphothreonine. Serine 1083 is subject to Phosphoserine. The segment covering 1195-1205 has biased composition (pro residues); the sequence is PAPPEPAPSAP. Over residues 1217-1230 the composition is skewed to polar residues; that stretch reads RVPSSGSSTLENTL.

The protein belongs to the TALPID3 family. In terms of assembly, interacts with CEP120. Interacts with CCP110, CEP290, CEP97, KIF24. Expressed in photoreceptor cells (at protein level).

It localises to the cytoplasm. It is found in the cytoskeleton. The protein resides in the microtubule organizing center. The protein localises to the centrosome. Its subcellular location is the photoreceptor inner segment. It localises to the centriole. It is found in the cilium basal body. Its function is as follows. Required for ciliogenesis and sonic hedgehog/SHH signaling. Required for the centrosomal recruitment of RAB8A and for the targeting of centriole satellite proteins to centrosomes such as of PCM1. May play a role in early ciliogenesis in the disappearance of centriolar satellites that preceeds ciliary vesicle formation. Involved in regulation of cell intracellular organization. Involved in regulation of cell polarity. Required for asymmetrical localization of CEP120 to daughter centrioles. This Mus musculus (Mouse) protein is Protein TALPID3 (Talpid3).